The chain runs to 497 residues: Guanosine-5'-triphosphate,3'-diphosphate pyrophosphatase (497 aa).

Belongs to the GppA/Ppx family. GppA subfamily.

The enzyme catalyses guanosine 3'-diphosphate 5'-triphosphate + H2O = guanosine 3',5'-bis(diphosphate) + phosphate + H(+). The protein operates within purine metabolism; ppGpp biosynthesis; ppGpp from GTP: step 2/2. Its function is as follows. Catalyzes the conversion of pppGpp to ppGpp. Guanosine pentaphosphate (pppGpp) is a cytoplasmic signaling molecule which together with ppGpp controls the 'stringent response', an adaptive process that allows bacteria to respond to amino acid starvation, resulting in the coordinated regulation of numerous cellular activities. This is Guanosine-5'-triphosphate,3'-diphosphate pyrophosphatase from Pseudoalteromonas translucida (strain TAC 125).